The primary structure comprises 405 residues: Envelope glycoprotein M (405 aa).

Over 1–17 (MKSSKNDTFVYRTWFKT) the chain is Intravirion. The chain crosses the membrane as a helical span at residues 18 to 38 (LVVYFVMFVMSAVVPITAMFP). Residues 39–76 (NLGYPCYFNALVDYGALNLTNYNLAHHLTPTLYLEPPE) lie on the Virion surface side of the membrane. The chain crosses the membrane as a helical span at residues 77 to 97 (MFVYITLVFIADCVAFIYYAC). Over 98–121 (GEVALIKARKKVSGLTDLSAWVSA) the chain is Intravirion. The chain crosses the membrane as a helical span at residues 122–142 (VGSPTVLFLAILKLWSIQVFI). Over 143-149 (QVLSYKH) the chain is Virion surface. A helical transmembrane segment spans residues 150–170 (VFLSAFVYFLHFLASVLHACA). Residues 171 to 192 (CVTRFSPVWVVKAQDNSIPQDT) are Intravirion-facing. The chain crosses the membrane as a helical span at residues 193 to 215 (FLWWVVFYLKPIVTNLYLGCLAL). The Virion surface portion of the chain corresponds to 216–245 (ETLVFSLSVFLALGNSFYFMVGDMVLGAVN). A helical membrane pass occupies residues 246-266 (LFLVLPIFWYILTEVWLASFL). Arginine 267 is a topological domain (intravirion). Residues 268-288 (HNFGFYCGMFIASIILILPLV) traverse the membrane as a helical segment. Residues 289–299 (RYEAVFVSAKL) are Virion surface-facing. The chain crosses the membrane as a helical span at residues 300–320 (HTTVAINVAIIPILCSVAMLI). Over 321–405 (RICRIFKSMR…TTDSEEEIFP (85 aa)) the chain is Intravirion. Positions 346-405 (LESEPRPRPSRTPSPGRNRRRSSTSSSSSRSTRRQRPVSTQALISSVLPMTTDSEEEIFP) are disordered. Over residues 386–397 (QALISSVLPMTT) the composition is skewed to polar residues.

It belongs to the herpesviridae glycoprotein M family. In terms of assembly, interacts (via N-terminus) with gN (via N-terminus). The gM-gN heterodimer forms the gCII complex.

It is found in the virion membrane. It localises to the host Golgi apparatus. The protein resides in the host trans-Golgi network. The protein localises to the host endosome membrane. Its subcellular location is the host nucleus inner membrane. In terms of biological role, envelope glycoprotein important for virion assembly and egress. Plays a role in the correct incorporation of gH-gL into virion membrane. Directs the glycoprotein N (gN) to the host trans-Golgi network. The polypeptide is Envelope glycoprotein M (Homo sapiens (Human)).